A 545-amino-acid chain; its full sequence is Capsular polysaccharide phosphotransferase SacB (545 aa).

This sequence belongs to the stealth family.

Functionally, part of a capsular biosynthesis operon and has been suggested to be the polymerase that links individual UDP-N-acetyl-D-mannosamine monomers. In serotype A the capsule is composed of repeated units of (alpha 1-6)-linked N-acetyl-D-mannosamine-1-phosphate. Non-polar disruption of this open reading frame prevented capsule synthesis. This Neisseria meningitidis serogroup A protein is Capsular polysaccharide phosphotransferase SacB (sacB).